A 503-amino-acid chain; its full sequence is Ell-associated factor Eaf (503 aa).

Polar residues-rich tracts occupy residues threonine 119–alanine 145 and glutamate 167–asparagine 186. Disordered stretches follow at residues threonine 119–aspartate 220, glycine 250–valine 360, and glycine 372–aspartate 503. Serine 196 bears the Phosphoserine mark. Over residues serine 202 to serine 215 the composition is skewed to low complexity. 2 stretches are compositionally biased toward polar residues: residues glycine 250 to isoleucine 273 and methionine 298 to serine 307. Over residues asparagine 308–serine 337 the composition is skewed to low complexity. The segment covering aspartate 385–glutamate 400 has biased composition (acidic residues). Low complexity-rich tracts occupy residues glutamine 406 to glutamine 437, histidine 454 to glutamine 472, and leucine 487 to serine 497.

It belongs to the EAF family.

The protein localises to the nucleus. Its function is as follows. Promotes transcriptional elongation by Su(Tpl)/ELL. Essential for development. The polypeptide is Ell-associated factor Eaf (Drosophila sechellia (Fruit fly)).